Here is a 293-residue protein sequence, read N- to C-terminus: Elongation factor Ts (293 aa).

Residues 80–83 form an involved in Mg(2+) ion dislocation from EF-Tu region; it reads TDFV.

This sequence belongs to the EF-Ts family.

It localises to the cytoplasm. Associates with the EF-Tu.GDP complex and induces the exchange of GDP to GTP. It remains bound to the aminoacyl-tRNA.EF-Tu.GTP complex up to the GTP hydrolysis stage on the ribosome. This is Elongation factor Ts from Burkholderia multivorans (strain ATCC 17616 / 249).